The chain runs to 49 residues: Large ribosomal subunit protein bL33B (49 aa).

It belongs to the bacterial ribosomal protein bL33 family.

This Bacillus licheniformis (strain ATCC 14580 / DSM 13 / JCM 2505 / CCUG 7422 / NBRC 12200 / NCIMB 9375 / NCTC 10341 / NRRL NRS-1264 / Gibson 46) protein is Large ribosomal subunit protein bL33B.